Consider the following 351-residue polypeptide: ATP-dependent 6-phosphofructokinase subunit gamma (351 aa).

In terms of assembly, heterododecamer of 4 alpha, 4 beta and 4 gamma chains. The gamma chain bridges the N-terminal halves of the alpha and beta subunits.

The protein localises to the cytoplasm. It functions in the pathway carbohydrate degradation; glycolysis; D-glyceraldehyde 3-phosphate and glycerone phosphate from D-glucose: step 3/4. Structural subunit of pyrophosphate--fructose 6-phosphate 1-phosphotransferase. Not required for catalytic activity. Fine-tunes allosteric regulation of the ATP-PFK by ATP, fructose 2,6-bisphosphate and AMP. This chain is ATP-dependent 6-phosphofructokinase subunit gamma (PFK3), found in Komagataella phaffii (strain GS115 / ATCC 20864) (Yeast).